The sequence spans 462 residues: Nitrogenase iron-iron protein beta chain (462 aa).

Cys-20, Cys-45, Cys-104, and Ser-143 together coordinate [8Fe-7S] cluster.

The protein belongs to the NifD/NifK/NifE/NifN family. In terms of assembly, hexamer of two alpha, two beta, and two delta chains. The cofactor is [8Fe-7S] cluster.

The catalysed reaction is N2 + 8 reduced [2Fe-2S]-[ferredoxin] + 16 ATP + 16 H2O = H2 + 8 oxidized [2Fe-2S]-[ferredoxin] + 2 NH4(+) + 16 ADP + 16 phosphate + 6 H(+). This iron-iron protein is part of the nitrogenase complex that catalyzes the key enzymatic reactions in nitrogen fixation. Other nitrogenase complexes utilize a molybdenum-iron protein or a vanadium-iron protein. This chain is Nitrogenase iron-iron protein beta chain (anfK), found in Azotobacter vinelandii.